Here is a 294-residue protein sequence, read N- to C-terminus: NAD kinase (294 aa).

The Proton acceptor role is filled by aspartate 74. Residues 74-75 (DG), 148-149 (NE), histidine 159, arginine 176, aspartate 178, 189-194 (TAYSLS), and glutamine 249 contribute to the NAD(+) site.

This sequence belongs to the NAD kinase family. The cofactor is a divalent metal cation.

Its subcellular location is the cytoplasm. The enzyme catalyses NAD(+) + ATP = ADP + NADP(+) + H(+). In terms of biological role, involved in the regulation of the intracellular balance of NAD and NADP, and is a key enzyme in the biosynthesis of NADP. Catalyzes specifically the phosphorylation on 2'-hydroxyl of the adenosine moiety of NAD to yield NADP. In Vibrio parahaemolyticus serotype O3:K6 (strain RIMD 2210633), this protein is NAD kinase.